A 419-amino-acid polypeptide reads, in one-letter code: Farnesyl pyrophosphate synthase (419 aa).

N-acetylmethionine is present on Met-1. Positions 123, 126, and 162 each coordinate isopentenyl diphosphate. The residue at position 123 (Lys-123) is an N6-(2-hydroxyisobutyryl)lysine; alternate. Lys-123 carries the post-translational modification N6-acetyllysine; alternate. 2 residues coordinate Mg(2+): Asp-169 and Asp-173. Arg-178 serves as a coordination point for dimethylallyl diphosphate. Arg-179 is a binding site for isopentenyl diphosphate. Residues Lys-266, Thr-267, Gln-306, Lys-323, and Lys-332 each coordinate dimethylallyl diphosphate. Lys-353 is subject to N6-acetyllysine.

Belongs to the FPP/GGPP synthase family. As to quaternary structure, homodimer. Interacts with RSAD2. In terms of assembly, (Microbial infection) Interacts with HTLV-1 protein p13(II). The cofactor is Mg(2+).

It is found in the cytoplasm. It catalyses the reaction isopentenyl diphosphate + dimethylallyl diphosphate = (2E)-geranyl diphosphate + diphosphate. The catalysed reaction is isopentenyl diphosphate + (2E)-geranyl diphosphate = (2E,6E)-farnesyl diphosphate + diphosphate. Its pathway is isoprenoid biosynthesis; farnesyl diphosphate biosynthesis; farnesyl diphosphate from geranyl diphosphate and isopentenyl diphosphate: step 1/1. It participates in isoprenoid biosynthesis; geranyl diphosphate biosynthesis; geranyl diphosphate from dimethylallyl diphosphate and isopentenyl diphosphate: step 1/1. Its activity is regulated as follows. Inactivated by interferon-induced RSAD2. This inactivation may result of disruption of lipid rafts at the plasma membrane, and thus have an antiviral effect since many enveloped viruses need lipid rafts to bud efficiently out of the cell. In terms of biological role, key enzyme in isoprenoid biosynthesis which catalyzes the formation of farnesyl diphosphate (FPP), a precursor for several classes of essential metabolites including sterols, dolichols, carotenoids, and ubiquinones. FPP also serves as substrate for protein farnesylation and geranylgeranylation. Catalyzes the sequential condensation of isopentenyl pyrophosphate with the allylic pyrophosphates, dimethylallyl pyrophosphate, and then with the resultant geranylpyrophosphate to the ultimate product farnesyl pyrophosphate. This chain is Farnesyl pyrophosphate synthase, found in Homo sapiens (Human).